A 138-amino-acid polypeptide reads, in one-letter code: Holo-[acyl-carrier-protein] synthase (138 aa).

2 residues coordinate Mg(2+): aspartate 8 and glutamate 57.

Belongs to the P-Pant transferase superfamily. AcpS family. Mg(2+) serves as cofactor.

The protein resides in the cytoplasm. The catalysed reaction is apo-[ACP] + CoA = holo-[ACP] + adenosine 3',5'-bisphosphate + H(+). Transfers the 4'-phosphopantetheine moiety from coenzyme A to a Ser of acyl-carrier-protein. The polypeptide is Holo-[acyl-carrier-protein] synthase (Phenylobacterium zucineum (strain HLK1)).